The chain runs to 441 residues: Protein translocase subunit SecY (441 aa).

Helical transmembrane passes span 24–44, 77–97, 123–143, 152–172, 181–201, 215–235, 272–292, 313–333, 373–393, and 397–417; these read LFVLGALIVYRIGSFIPVPGI, ILALGIMPYISASIVIQLLAT, ATVVFATIQAVAISTGLPNML, FSFYFTSVVSLVTGTMFLMWL, IGNGISILVFGGIVAGLPSAI, PLVLLLIAAIVFAVTYFVVFV, VMPAIFASSIILFPATLTQWF, PLYLLVYAVAIIFFSFFYTAM, LIGGLYVTFVCLVPYIMTSAW, and FYFGGTSLLIVVVVIMDFIVQ.

This sequence belongs to the SecY/SEC61-alpha family. As to quaternary structure, component of the Sec protein translocase complex. Heterotrimer consisting of SecY, SecE and SecG subunits. The heterotrimers can form oligomers, although 1 heterotrimer is thought to be able to translocate proteins. Interacts with the ribosome. Interacts with SecDF, and other proteins may be involved. Interacts with SecA.

The protein localises to the cell inner membrane. Its function is as follows. The central subunit of the protein translocation channel SecYEG. Consists of two halves formed by TMs 1-5 and 6-10. These two domains form a lateral gate at the front which open onto the bilayer between TMs 2 and 7, and are clamped together by SecE at the back. The channel is closed by both a pore ring composed of hydrophobic SecY resides and a short helix (helix 2A) on the extracellular side of the membrane which forms a plug. The plug probably moves laterally to allow the channel to open. The ring and the pore may move independently. The polypeptide is Protein translocase subunit SecY (Haemophilus influenzae (strain ATCC 51907 / DSM 11121 / KW20 / Rd)).